The following is a 712-amino-acid chain: 1,4-alpha-glucan branching enzyme GlgB (712 aa).

Residue Asp-397 is the Nucleophile of the active site. The active-site Proton donor is Glu-450.

Belongs to the glycosyl hydrolase 13 family. GlgB subfamily. As to quaternary structure, monomer.

The enzyme catalyses Transfers a segment of a (1-&gt;4)-alpha-D-glucan chain to a primary hydroxy group in a similar glucan chain.. It functions in the pathway glycan biosynthesis; glycogen biosynthesis. In terms of biological role, catalyzes the formation of the alpha-1,6-glucosidic linkages in glycogen by scission of a 1,4-alpha-linked oligosaccharide from growing alpha-1,4-glucan chains and the subsequent attachment of the oligosaccharide to the alpha-1,6 position. This chain is 1,4-alpha-glucan branching enzyme GlgB, found in Bradyrhizobium sp. (strain BTAi1 / ATCC BAA-1182).